The primary structure comprises 231 residues: 2-C-methyl-D-erythritol 4-phosphate cytidylyltransferase (231 aa).

Belongs to the IspD/TarI cytidylyltransferase family. IspD subfamily.

It catalyses the reaction 2-C-methyl-D-erythritol 4-phosphate + CTP + H(+) = 4-CDP-2-C-methyl-D-erythritol + diphosphate. It participates in isoprenoid biosynthesis; isopentenyl diphosphate biosynthesis via DXP pathway; isopentenyl diphosphate from 1-deoxy-D-xylulose 5-phosphate: step 2/6. Catalyzes the formation of 4-diphosphocytidyl-2-C-methyl-D-erythritol from CTP and 2-C-methyl-D-erythritol 4-phosphate (MEP). The protein is 2-C-methyl-D-erythritol 4-phosphate cytidylyltransferase of Fusobacterium nucleatum subsp. nucleatum (strain ATCC 25586 / DSM 15643 / BCRC 10681 / CIP 101130 / JCM 8532 / KCTC 2640 / LMG 13131 / VPI 4355).